Consider the following 188-residue polypeptide: Elongation factor P (188 aa).

Belongs to the elongation factor P family.

It is found in the cytoplasm. The protein operates within protein biosynthesis; polypeptide chain elongation. Functionally, involved in peptide bond synthesis. Stimulates efficient translation and peptide-bond synthesis on native or reconstituted 70S ribosomes in vitro. Probably functions indirectly by altering the affinity of the ribosome for aminoacyl-tRNA, thus increasing their reactivity as acceptors for peptidyl transferase. The polypeptide is Elongation factor P (Anaplasma marginale (strain St. Maries)).